We begin with the raw amino-acid sequence, 421 residues long: Signal recognition particle receptor FtsY (421 aa).

Residues 228 to 235 (GINGAGKT), 309 to 313 (DTAGR), and 373 to 376 (TKLD) each bind GTP.

The protein belongs to the GTP-binding SRP family. FtsY subfamily. In terms of assembly, part of the signal recognition particle protein translocation system, which is composed of SRP and FtsY. SRP is a ribonucleoprotein composed of Ffh and a 4.5S RNA molecule.

The protein localises to the cell inner membrane. It is found in the cytoplasm. The catalysed reaction is GTP + H2O = GDP + phosphate + H(+). Functionally, involved in targeting and insertion of nascent membrane proteins into the cytoplasmic membrane. Acts as a receptor for the complex formed by the signal recognition particle (SRP) and the ribosome-nascent chain (RNC). Interaction with SRP-RNC leads to the transfer of the RNC complex to the Sec translocase for insertion into the membrane, the hydrolysis of GTP by both Ffh and FtsY, and the dissociation of the SRP-FtsY complex into the individual components. The protein is Signal recognition particle receptor FtsY of Neisseria meningitidis serogroup B (strain ATCC BAA-335 / MC58).